We begin with the raw amino-acid sequence, 264 residues long: Phosphonoacetaldehyde hydrolase (264 aa).

Asp-9 functions as the Nucleophile in the catalytic mechanism. Mg(2+) contacts are provided by Asp-9 and Ala-11. Residue Lys-50 is the Schiff-base intermediate with substrate of the active site. Asp-183 contributes to the Mg(2+) binding site.

This sequence belongs to the HAD-like hydrolase superfamily. PhnX family. As to quaternary structure, homodimer. Requires Mg(2+) as cofactor.

The enzyme catalyses phosphonoacetaldehyde + H2O = acetaldehyde + phosphate + H(+). Its function is as follows. Involved in phosphonate degradation. The sequence is that of Phosphonoacetaldehyde hydrolase from Bacillus thuringiensis (strain Al Hakam).